The chain runs to 145 residues: Conglutin (145 aa).

Positions 1 to 21 (MAKSTILVALLALVLVAHASA) are cleaved as a signal peptide. Intrachain disulfides connect C35-C92, C47-C79, C80-C128, C94-C136, and C105-C145.

It belongs to the 2S seed storage albumins family. Expressed in seeds. Not expressed in roots, pegs (budding ovaries) or leaves.

The chain is Conglutin from Arachis hypogaea (Peanut).